Consider the following 211-residue polypeptide: Uridine kinase (211 aa).

Glycine 12 to threonine 19 contacts ATP.

Belongs to the uridine kinase family.

The protein localises to the cytoplasm. It catalyses the reaction uridine + ATP = UMP + ADP + H(+). The catalysed reaction is cytidine + ATP = CMP + ADP + H(+). Its pathway is pyrimidine metabolism; CTP biosynthesis via salvage pathway; CTP from cytidine: step 1/3. It functions in the pathway pyrimidine metabolism; UMP biosynthesis via salvage pathway; UMP from uridine: step 1/1. The chain is Uridine kinase from Streptococcus thermophilus (strain CNRZ 1066).